The primary structure comprises 175 residues: Cytochrome c homolog (175 aa).

At 1 to 8 (MSGKELNK) the chain is on the cytoplasmic side. The chain crosses the membrane as a helical; Signal-anchor span at residues 9–29 (IVAAILFASLIAMMVGFVANI). At 30-175 (LYKPTLELQH…LFLKTYVHDK (146 aa)) the chain is on the periplasmic side. Positions 84, 87, 88, and 150 each coordinate heme c.

It belongs to the cytochrome c family. In terms of processing, binds 1 heme c group covalently per subunit.

Its subcellular location is the cell membrane. In terms of biological role, may be involved in electron transfer from bc1 complex to aa3. The polypeptide is Cytochrome c homolog (cycM) (Rickettsia conorii (strain ATCC VR-613 / Malish 7)).